The chain runs to 690 residues: eEF1A lysine and N-terminal methyltransferase (690 aa).

The disordered stretch occupies residues 427 to 451; it reads AAASSASKKKNKKKAKQPASTGAKD. Positions 433–442 are enriched in basic residues; the sequence is SKKKNKKKAK.

Belongs to the methyltransferase superfamily.

It carries out the reaction L-lysyl-[protein] + S-adenosyl-L-methionine = N(6)-methyl-L-lysyl-[protein] + S-adenosyl-L-homocysteine + H(+). The catalysed reaction is N(6)-methyl-L-lysyl-[protein] + S-adenosyl-L-methionine = N(6),N(6)-dimethyl-L-lysyl-[protein] + S-adenosyl-L-homocysteine + H(+). The enzyme catalyses N-terminal glycyl-L-lysyl-L-glutamyl-[protein] + 3 S-adenosyl-L-methionine = N-terminal N,N,N-trimethyl-glycyl-L-lysyl-L-glutamyl-[protein] + 3 S-adenosyl-L-homocysteine + 3 H(+). Its function is as follows. Dual methyltransferase that catalyzes methylation of elongation factor 1-alpha (eef1a1 and eef1a2) at two different positions, and is therefore involved in the regulation of mRNA translation. Via its C-terminus, methylates the N-terminus of eef1a1 and eef1a2. Via its N-terminus dimethylates lysine residues of eef1a1 and eef1a2. In Danio rerio (Zebrafish), this protein is eEF1A lysine and N-terminal methyltransferase (mettl13).